The sequence spans 679 residues: Stress-70 protein, mitochondrial (679 aa).

The N-terminal 46 residues, 1–46, are a transit peptide targeting the mitochondrion; it reads MISASRAAVSRFVGTAASRGPTAARHQDGWNGLSHEAFRIVSRRDY. Residues 1 to 432 are interaction with NFS1; it reads MISASRAAVS…IQGGVLAGDV (432 aa). Positions 63 and 64 each coordinate ADP. The tract at residues 63-431 is nucleotide-binding domain (NBD); the sequence is TNSCVAVMEG…AIQGGVLAGD (369 aa). K76 is subject to N6-acetyllysine. The residue at position 87 (T87) is a Phosphothreonine. 2 positions are modified to N6-acetyllysine; alternate: K135 and K138. An N6-succinyllysine; alternate mark is found at K135 and K138. At K143 the chain carries N6-acetyllysine. Residue K206 is modified to N6-acetyllysine; alternate. K206 bears the N6-succinyllysine; alternate mark. K206 is subject to N6-malonyllysine; alternate. An N6-acetyllysine mark is found at K234 and K288. The residue at position 300 (K300) is an N6-acetyllysine; alternate. N6-succinyllysine; alternate is present on K300. ADP contacts are provided by E313, K316, and S320. N6-succinyllysine is present on K368. Positions 388 and 391 each coordinate ADP. K394 is subject to N6-succinyllysine. S408 carries the phosphoserine modification. Residues 432–441 are interdomain linker; the sequence is VTDVLLLDVT. The interval 432–679 is interaction with FXN and ISCU; it reads VTDVLLLDVT…QKDNQKEEKQ (248 aa). The segment at 442-679 is substrate-binding domain (SBD); it reads PLSLGIETLG…QKDNQKEEKQ (238 aa). Position 513 is an omega-N-methylarginine (R513). N6-acetyllysine; alternate occurs at positions 567 and 600. N6-succinyllysine; alternate occurs at positions 567 and 600. K610 carries the N6-succinyllysine modification. N6-acetyllysine is present on K612. K646 is modified (N6-acetyllysine; alternate). K646 bears the N6-succinyllysine; alternate mark. Positions 656–679 are disordered; it reads ASEREGSGSSGTGEQKDNQKEEKQ. Residues 669–679 show a composition bias toward basic and acidic residues; that stretch reads EQKDNQKEEKQ.

This sequence belongs to the heat shock protein 70 family. Interacts strongly with the intermediate form of FXN and weakly with its mature form. Interacts with HSCB. Associates with the mitochondrial contact site and cristae organizing system (MICOS) complex, composed of at least MICOS10/MIC10, CHCHD3/MIC19, CHCHD6/MIC25, APOOL/MIC27, IMMT/MIC60, APOO/MIC23/MIC26 and QIL1/MIC13. This complex was also known under the names MINOS or MitOS complex. The MICOS complex associates with mitochondrial outer membrane proteins SAMM50, MTX1, MTX2 and DNAJC11, mitochondrial inner membrane protein TMEM11 and with HSPA9. Interacts with DNLZ, the interaction is required to prevent self-aggregation. Interacts with TESPA1. Interacts with PDPN. Interacts with NFU1, NFS1 and ISCU. Interacts with TP53; the interaction promotes TP53 degradation. Interacts (via SBD domain) with UBXN2A; the interaction with UBXN2A inhibits HSPA9/MOT-2 interaction with and degradation of TP53, thereby promotes TP53 translocation to the nucleus. Interacts with ITPR1 AND VDAC1; this interaction couples ITPR1 to VDAC1. Component of the TIM23 mitochondrial inner membrane pre-sequence translocase complex.

The protein resides in the mitochondrion. Its subcellular location is the nucleus. It localises to the nucleolus. The protein localises to the cytoplasm. It is found in the mitochondrion matrix. The enzyme catalyses ATP + H2O = ADP + phosphate + H(+). The chaperone activity is regulated by ATP-induced allosteric coupling of the nucleotide-binding (NBD) and substrate-binding (SBD) domains. ATP binding in the NBD leads to a conformational change in the NBD, which is transferred through the interdomain linker (IDL) to the substrate-binding domain (SBD). This elicits a reduced substrate affinity and a faster substrate exchange rate. Upon hydrolysis of ATP to ADP, the protein undergoes a conformational change that increases its affinity for substrate proteins. It cycles through repeated phases of ATP hydrolysis and nucleotide exchange, facilitating repeated cycles of substrate binding and release. Functions in collaboration with co-chaperones. Functions with the co-chaperone, DNLZ, to maintain solubility and regulate ATP hydrolysis. Nucleotide exchange factors, GRPEL1 and GRPEL2, accelerate nucleotide exchange. Its function is as follows. Mitochondrial chaperone that plays a key role in mitochondrial protein import, folding, and assembly. Plays an essential role in the protein quality control system, the correct folding of proteins, the re-folding of misfolded proteins, and the targeting of proteins for subsequent degradation. These processes are achieved through cycles of ATP binding, ATP hydrolysis, and ADP release, mediated by co-chaperones. In mitochondria, it associates with the TIM (translocase of the inner membrane) protein complex to assist in the import and folding of mitochondrial proteins. Plays an important role in mitochondrial iron-sulfur cluster (ISC) biogenesis, interacts with and stabilizes ISC cluster assembly proteins FXN, NFU1, NFS1 and ISCU. Regulates erythropoiesis via stabilization of ISC assembly. Regulates mitochondrial calcium-dependent apoptosis by coupling two calcium channels, ITPR1 and VDAC1, at the mitochondria-associated endoplasmic reticulum (ER) membrane to facilitate calcium transport from the ER lumen to the mitochondria intermembrane space, providing calcium for the downstream calcium channel MCU, which releases it into the mitochondrial matrix. Although primarily located in the mitochondria, it is also found in other cellular compartments. In the cytosol, it associates with proteins involved in signaling, apoptosis, or senescence. It may play a role in cell cycle regulation via its interaction with and promotion of degradation of TP53. May play a role in the control of cell proliferation and cellular aging. Protects against reactive oxygen species (ROS). Extracellular HSPA9 plays a cytoprotective role by preventing cell lysis following immune attack by the membrane attack complex by disrupting formation of the complex. The chain is Stress-70 protein, mitochondrial from Bos taurus (Bovine).